The primary structure comprises 188 residues: Ribosome maturation factor RimM (188 aa).

The 77-residue stretch at 98-174 (EGTFYYHDLR…HLTADAPAGL (77 aa)) folds into the PRC barrel domain. The disordered stretch occupies residues 169-188 (DAPAGLIGPEPGEEDGAAES). Residues 179 to 188 (PGEEDGAAES) show a composition bias toward acidic residues.

It belongs to the RimM family. Binds ribosomal protein uS19.

It localises to the cytoplasm. Its function is as follows. An accessory protein needed during the final step in the assembly of 30S ribosomal subunit, possibly for assembly of the head region. Essential for efficient processing of 16S rRNA. May be needed both before and after RbfA during the maturation of 16S rRNA. It has affinity for free ribosomal 30S subunits but not for 70S ribosomes. This is Ribosome maturation factor RimM from Deinococcus radiodurans (strain ATCC 13939 / DSM 20539 / JCM 16871 / CCUG 27074 / LMG 4051 / NBRC 15346 / NCIMB 9279 / VKM B-1422 / R1).